The chain runs to 339 residues: Dihydroorotate dehydrogenase (quinone) (339 aa).

FMN contacts are provided by residues 62-66 (AGMDK) and threonine 86. Lysine 66 is a substrate binding site. Substrate is bound at residue 111–115 (NRMGF). FMN is bound by residues asparagine 139 and asparagine 172. Asparagine 172 contributes to the substrate binding site. Serine 175 (nucleophile) is an active-site residue. Residue asparagine 177 coordinates substrate. Positions 217 and 245 each coordinate FMN. 246–247 (NT) serves as a coordination point for substrate. FMN-binding positions include glycine 268, glycine 297, and 318-319 (YS).

The protein belongs to the dihydroorotate dehydrogenase family. Type 2 subfamily. Monomer. Requires FMN as cofactor.

It localises to the cell membrane. The enzyme catalyses (S)-dihydroorotate + a quinone = orotate + a quinol. It functions in the pathway pyrimidine metabolism; UMP biosynthesis via de novo pathway; orotate from (S)-dihydroorotate (quinone route): step 1/1. Functionally, catalyzes the conversion of dihydroorotate to orotate with quinone as electron acceptor. In Shewanella sp. (strain ANA-3), this protein is Dihydroorotate dehydrogenase (quinone).